Reading from the N-terminus, the 734-residue chain is Photosystem I P700 chlorophyll a apoprotein A2 (734 aa).

8 consecutive transmembrane segments (helical) span residues 46–69 (IFAS…FHVA), 135–158 (LYTG…LHLQ), 175–199 (LNHH…HVAI), 273–291 (MAHH…GHMY), 330–353 (IHFQ…QHMY), 369–395 (AALY…IFFI), 417–439 (AIIS…LYVH), and 517–535 (FLVH…LILV). [4Fe-4S] cluster-binding residues include C559 and C568. Transmembrane regions (helical) follow at residues 575 to 596 (AFYL…YWHW) and 643 to 665 (LSVW…MFLI). 3 residues coordinate chlorophyll a: H654, M662, and Y670. W671 serves as a coordination point for phylloquinone. A helical transmembrane segment spans residues 707–727 (LVGLAHFSVGYIFTYAAFLIA).

This sequence belongs to the PsaA/PsaB family. The PsaA/B heterodimer binds the P700 chlorophyll special pair and subsequent electron acceptors. PSI consists of a core antenna complex that captures photons, and an electron transfer chain that converts photonic excitation into a charge separation. The eukaryotic PSI reaction center is composed of at least 11 subunits. The cofactor is P700 is a chlorophyll a/chlorophyll a' dimer, A0 is one or more chlorophyll a, A1 is one or both phylloquinones and FX is a shared 4Fe-4S iron-sulfur center..

It is found in the plastid. The protein localises to the chloroplast thylakoid membrane. It carries out the reaction reduced [plastocyanin] + hnu + oxidized [2Fe-2S]-[ferredoxin] = oxidized [plastocyanin] + reduced [2Fe-2S]-[ferredoxin]. PsaA and PsaB bind P700, the primary electron donor of photosystem I (PSI), as well as the electron acceptors A0, A1 and FX. PSI is a plastocyanin-ferredoxin oxidoreductase, converting photonic excitation into a charge separation, which transfers an electron from the donor P700 chlorophyll pair to the spectroscopically characterized acceptors A0, A1, FX, FA and FB in turn. Oxidized P700 is reduced on the lumenal side of the thylakoid membrane by plastocyanin. This chain is Photosystem I P700 chlorophyll a apoprotein A2, found in Helianthus annuus (Common sunflower).